The sequence spans 168 residues: uncharacterized protein (168 aa).

Positions 18-73 are disordered; the sequence is RTTVKTKSHNPKTLYPNNKPRWESKLHAGPKGFQSSRTSEKPGRPDPDPEDDPPIP. Over residues 55–64 the composition is skewed to basic and acidic residues; that stretch reads TSEKPGRPDP. 2 consecutive transmembrane segments (helical) span residues 84–104 and 113–133; these read IVVS…VLEV and VPLW…ALGI.

It is found in the membrane. This is an uncharacterized protein from Arabidopsis thaliana (Mouse-ear cress).